A 548-amino-acid polypeptide reads, in one-letter code: ETS domain-containing transcription factor ERF (548 aa).

Phosphothreonine occurs at positions 3 and 7. Phosphoserine occurs at positions 20 and 24. A DNA-binding region (ETS) is located at residues 27–107 (IQLWHFILEL…KGKRFTYKFN (81 aa)). Disordered stretches follow at residues 130–169 (QSAP…SSSS), 184–225 (GSVS…LARL), and 280–304 (SPTL…SHFS). Phosphoserine is present on residues S185 and S190. Gly residues predominate over residues 289–301 (SGGGGPSGSGGGS). A Phosphoserine modification is found at S327. The segment at 342–478 (PQRPDKCPLP…GEAPGASQCM (137 aa)) is disordered. A compositionally biased stretch (pro residues) spans 348–361 (CPLPPMAPETPPVP). Low complexity-rich tracts occupy residues 362–373 (SSASSSSSSSSS) and 394–403 (KAVAGADKSG). Phosphoserine is present on residues S431 and S435. Acidic residues predominate over residues 431 to 451 (SEGESEEVEVTDISDEDEEDG). Phosphothreonine is present on T441. S444 is subject to Phosphoserine. Glycyl lysine isopeptide (Lys-Gly) (interchain with G-Cter in SUMO2) cross-links involve residues K465, K481, and K512. Positions 492-548 (CRLEGGGGPAGGFEDEGEDKKVRGEGPGEAGGPLTPRRVSSDLQHATAQLSLEHRDS) are disordered. T526 bears the Phosphothreonine; by MAPK1 mark. Phosphoserine is present on residues S531, S532, and S548. Positions 532 to 541 (SDLQHATAQL) are enriched in polar residues.

Belongs to the ETS family. Phosphorylated by multiple kinases including MAPK1/ERK2 at THR-526. Phosphorylation regulates the activity of ERF. As to expression, highest levels in testis, ovary, pancreas, and heart.

It is found in the nucleus. Its function is as follows. Potent transcriptional repressor that binds to the H1 element of the Ets2 promoter. May regulate other genes involved in cellular proliferation. Required for extraembryonic ectoderm differentiation, ectoplacental cone cavity closure, and chorioallantoic attachment. May be important for regulating trophoblast stem cell differentiation. This chain is ETS domain-containing transcription factor ERF (ERF), found in Homo sapiens (Human).